Here is a 177-residue protein sequence, read N- to C-terminus: Myosin regulatory light chain 2 (177 aa).

Residues 1-16 (MSRKSGSRSSSKRSKK) show a composition bias toward basic residues. Residues 1–24 (MSRKSGSRSSSKRSKKSGGGSNVF) are disordered. 6 igE-binding epitope regions span residues 13-30 (RSKK…FTQR), 22-48 (NVFD…DKDG), 49-66 (VIGK…GRIA), 58-90 (TFDE…LLNM), 79-99 (PAPI…TGES), and 118-141 (NIDC…QEAD). Residues 30 to 65 (RQVAEFKEGFQLMDRDKDGVIGKTDLRGTFDEIGRI) form the EF-hand 1 domain. Ca(2+) is bound by residues Asp-43, Asp-45, Asp-47, and Asp-54. Positions 135 to 170 (FSSQEADDALDQMDIDDGGKIDVQGVIQMLTAGGGD) constitute an EF-hand 2 domain.

As to quaternary structure, myosin is a hexamer of 2 heavy chains and 4 light chains. Expressed in tail muscle (at protein level).

This is Myosin regulatory light chain 2 from Penaeus vannamei (Whiteleg shrimp).